We begin with the raw amino-acid sequence, 370 residues long: Peptidyl-prolyl cis-trans isomerase D (370 aa).

A Phosphoserine modification is found at Ser5. In terms of domain architecture, PPIase cyclophilin-type spans 19–183; it reads FFDVDIGGER…KLCVIAECGE (165 aa). An N6-acetyllysine modification is found at Lys171. The segment at 185–215 is chaperone activity; the sequence is KEGDDWGIFPKDGSGDSHPDFPEDADVDLKD. Ser198 is modified (phosphoserine). The tract at residues 214-370 is interaction with HSP90AB1; sequence KDVDKILLIS…EKAAYAKMFA (157 aa). TPR repeat units follow at residues 223 to 256, 273 to 306, and 307 to 340; these read SEDLKNIGNTFFKSQNWEMAIKKYTKVLRYVEGS, LSCVLNIGACKLKMSDWQGAVDSCLEALEIDPSN, and TKALYRRAQGWQGLKEYDQALADLKKAQEIAPED.

This sequence belongs to the cyclophilin-type PPIase family. PPIase D subfamily. In terms of assembly, identified in ESR1 or NR3C1/GCR steroid receptor-chaperone complexes. Found in HSP90 chaperone complexes with kinase clients LCK or EIF2AK1. Two monomers associate with one HSP90 homodimer. Interacts with HSP90AA1. Interacts with HSP90AB1; PPID and FKBP4 compete for binding to HSP90AB1 and the interaction is mutually exclusive with the PPID:HSPA8 interaction. Interacts with HSPA8; PPID and STIP1 but not FKBP4 compete for binding to HSPA8 and the interaction is mutually exclusive with the PPID:HSP90AB1 interaction. Interacts with S100A1 and S100A2; the interactions dissociate the PPID:HSP90AA1 interaction. Interacts with S100A6. Interacts with MYB, ILF2, XRCC6, RACK1 and RPS3. Interacts with cytoplasmic dynein 1 intermediate chain (DYNC1I1 or DYNC1I2). In terms of processing, the N-terminus is blocked. As to expression, detected in heart, thymis and brain.

The protein resides in the cytoplasm. Its subcellular location is the nucleus. It is found in the nucleolus. It localises to the nucleoplasm. It carries out the reaction [protein]-peptidylproline (omega=180) = [protein]-peptidylproline (omega=0). With respect to regulation, less sensitive to inhibition by cyclosporin A than is CYP-18. Its function is as follows. PPIase that catalyzes the cis-trans isomerization of proline imidic peptide bonds in oligopeptides and may therefore assist protein folding. Proposed to act as a co-chaperone in HSP90 complexes such as in unligated steroid receptors heterocomplexes. Different co-chaperones seem to compete for association with HSP90 thus establishing distinct HSP90-co-chaperone-receptor complexes with the potential to exert tissue-specific receptor activity control. May have a preference for estrogen receptor complexes and is not found in glucocorticoid receptor complexes. May be involved in cytoplasmic dynein-dependent movement of the receptor from the cytoplasm to the nucleus. May regulate MYB by inhibiting its DNA-binding activity. Involved in regulation of AHR signaling by promoting the formation of the AHR:ARNT dimer; the function is independent of HSP90 but requires the chaperone activity. Involved in regulation of UV radiation-induced apoptosis. The polypeptide is Peptidyl-prolyl cis-trans isomerase D (Bos taurus (Bovine)).